The chain runs to 150 residues: UPF0208 membrane protein VS_0999 (150 aa).

2 consecutive transmembrane segments (helical) span residues 42–62 (FGVKVMPAIAAISVLTQMVFN) and 70–90 (AVVMALFAISLPLQGMWWLGN).

This sequence belongs to the UPF0208 family.

Its subcellular location is the cell inner membrane. This chain is UPF0208 membrane protein VS_0999, found in Vibrio atlanticus (strain LGP32) (Vibrio splendidus (strain Mel32)).